Consider the following 365-residue polypeptide: Protein AC54 (365 aa).

As to quaternary structure, interacts with C42 and VP80. Interacts with protein 38K.

The protein localises to the virion. Its function is as follows. Structural protein that participates in nucleocapsid assembly. Plays an essential role in the proper localization of the major capsid protein VP39, and the minor capsid protein 38K into the capsid assembly site. The chain is Protein AC54 (AC54) from Lepidoptera (butterflies and moths).